The following is a 379-amino-acid chain: uncharacterized protein (379 aa).

This sequence belongs to the herpesviridae US22 family.

This is an uncharacterized protein from Human cytomegalovirus (strain AD169) (HHV-5).